A 213-amino-acid chain; its full sequence is Octanoyltransferase (213 aa).

A BPL/LPL catalytic domain is found at 32–207 (ESTLDEIWLV…NILALLNNPD (176 aa)). Residues 71–78 (RGGQVTYH), 138–140 (SLG), and 151–153 (GLA) each bind substrate. Residue cysteine 169 is the Acyl-thioester intermediate of the active site.

Belongs to the LipB family.

The protein localises to the cytoplasm. The catalysed reaction is octanoyl-[ACP] + L-lysyl-[protein] = N(6)-octanoyl-L-lysyl-[protein] + holo-[ACP] + H(+). It participates in protein modification; protein lipoylation via endogenous pathway; protein N(6)-(lipoyl)lysine from octanoyl-[acyl-carrier-protein]: step 1/2. Catalyzes the transfer of endogenously produced octanoic acid from octanoyl-acyl-carrier-protein onto the lipoyl domains of lipoate-dependent enzymes. Lipoyl-ACP can also act as a substrate although octanoyl-ACP is likely to be the physiological substrate. This Escherichia coli O17:K52:H18 (strain UMN026 / ExPEC) protein is Octanoyltransferase.